The following is a 297-amino-acid chain: Homoserine kinase (297 aa).

82–92 is an ATP binding site; the sequence is PLTRGLGSSAS.

This sequence belongs to the GHMP kinase family. Homoserine kinase subfamily.

The protein resides in the cytoplasm. It catalyses the reaction L-homoserine + ATP = O-phospho-L-homoserine + ADP + H(+). Its pathway is amino-acid biosynthesis; L-threonine biosynthesis; L-threonine from L-aspartate: step 4/5. Its function is as follows. Catalyzes the ATP-dependent phosphorylation of L-homoserine to L-homoserine phosphate. This is Homoserine kinase from Bacillus thuringiensis subsp. konkukian (strain 97-27).